The primary structure comprises 218 residues: Ribose-5-phosphate isomerase A (218 aa).

Residues 28–31, 81–84, and 94–97 each bind substrate; these read TGST, DGAD, and KGGG. The Proton acceptor role is filled by glutamate 103. A substrate-binding site is contributed by lysine 121.

The protein belongs to the ribose 5-phosphate isomerase family. Homodimer.

It carries out the reaction aldehydo-D-ribose 5-phosphate = D-ribulose 5-phosphate. Its pathway is carbohydrate degradation; pentose phosphate pathway; D-ribose 5-phosphate from D-ribulose 5-phosphate (non-oxidative stage): step 1/1. Catalyzes the reversible conversion of ribose-5-phosphate to ribulose 5-phosphate. The polypeptide is Ribose-5-phosphate isomerase A (Vibrio vulnificus (strain CMCP6)).